A 2948-amino-acid chain; its full sequence is Transforming acidic coiled-coil-containing protein 2 (2948 aa).

Residues 1–30 (MGNENSTSDNQRTLSAQTPRSAQPPGNSQN) show a composition bias toward polar residues. Disordered stretches follow at residues 1 to 304 (MGNE…TDDL), 314 to 333 (RSNSGAAPEAEVNAASQESC), 392 to 453 (AAGG…MPVS), 465 to 785 (LVGL…PQGE), 825 to 964 (SSEK…VSPP), 985 to 1050 (CTGQ…QPDS), 1062 to 1154 (ALAP…GEAT), 1243 to 1274 (AAQRGAEDSGVKAVSSADPRAPGESPCPVGEP), 1296 to 1400 (QPGA…EQIA), 1427 to 1463 (PGEKAGAGRSAVGKDLTRPLGPEKLLDGPPGVDVTLL), 1493 to 1661 (ASDK…GERR), 1675 to 1705 (LGNQSTPAPPTGEVADTPLEPGKVAGAAGEA), 1741 to 1878 (VLPG…ESPT), 1907 to 2035 (HAGL…SSGT), and 2052 to 2460 (LEPR…ETPP). The segment covering 174-184 (GRERQPKEEGQ) has biased composition (basic and acidic residues). A phosphoserine mark is found at Ser197, Ser201, and Ser269. Phosphothreonine is present on Val325. Position 493 is a phosphoserine (Ser493). Basic and acidic residues predominate over residues 496–507 (ERGEHLNTEQSH). Residues Ser561, Ser571, and Ser575 each carry the phosphoserine modification. The span at 604 to 629 (SKRDPEVGKDELSKPSSDAESRDHPS) shows a compositional bias: basic and acidic residues. The residue at position 758 (Ser758) is a Phosphoserine. The span at 911 to 926 (SDTPTSSPTDMVWESS) shows a compositional bias: low complexity. A Phosphoserine modification is found at Ser962. Over residues 985–996 (CTGQGPNKSQQA) the composition is skewed to polar residues. Position 1025 is a phosphoserine (Ser1025). Residues Ser1267 and Ser1313 each carry the phosphoserine modification. Positions 1348–1357 (ATAPGAGAKA) are enriched in low complexity. The span at 1383–1400 (DPKQGTSGGVDTSSEQIA) shows a compositional bias: polar residues. Ser1562 is modified (phosphoserine). Composition is skewed to basic and acidic residues over residues 1801–1823 (DETHDPKLQHLAPEELHTDRESP) and 1834–1854 (PKKDAPRVMDKVTSDETRGAE). Positions 1862 to 1873 (ADDIIQPAAPAD) are enriched in low complexity. The span at 1939–1948 (PAKDLSRSSD) shows a compositional bias: basic and acidic residues. Over residues 1963 to 1976 (KAPPAPPPPPPEVI) the composition is skewed to pro residues. Ser2072 bears the Phosphoserine mark. Polar residues predominate over residues 2074–2102 (DSVPISKSTLSRSLSLQASDFDGASSSGN). Positions 2114-2124 (STGSSSASSTL) are enriched in low complexity. Residues 2125–2141 (KRTKKPRPPSLKKKQTT) are compositionally biased toward basic residues. Phosphoserine occurs at positions 2161 and 2226. Phosphothreonine is present on Thr2246. Phosphoserine is present on Ser2256. Over residues 2265-2275 (LEFDYSEDKSS) the composition is skewed to basic and acidic residues. Residues 2288-2305 (KIGKKPVAKMPLRRPKMK) show a composition bias toward basic residues. Residues 2315–2403 (PASPPRSPAE…SPASFEIPAS (89 aa)) enclose the SPAZ domain. Ser2317, Ser2321, Ser2359, Ser2389, Ser2392, Ser2394, and Ser2403 each carry phosphoserine. Residues 2348–2368 (NPFSSTSKMQESPKLPQQSYN) show a composition bias toward polar residues. Over residues 2382 to 2395 (KTSSKTPSSPSKSP) the composition is skewed to low complexity. 4 positions are modified to phosphothreonine: Thr2430, Thr2451, Thr2455, and Thr2458. Phosphoserine occurs at positions 2512 and 2534. Thr2553 carries the phosphothreonine modification. Residues 2555–2577 (QESPVKSSPVRMSESPTPCSGSS) are disordered. A phosphoserine mark is found at Ser2557 and Ser2569. The span at 2568 to 2577 (ESPTPCSGSS) shows a compositional bias: polar residues. The residue at position 2625 (Thr2625) is a Phosphothreonine. Coiled coils occupy residues 2675–2703 (AQKLQEELEFAIMRIEALKLARQIALASR) and 2746–2947 (DLDS…KMGK).

It belongs to the TACC family. Interacts with CCDC100/CEP120. Interacts with microtubules. Interacts with YEATS4, GCN5L2 and PCAF. Phosphorylated by TTK; which is required for localization in centrosome. In terms of tissue distribution, strongly expressed in heart, skeletal muscle, brain, prostate, thyroid and trachea.

The protein resides in the cytoplasm. The protein localises to the nucleus. Its subcellular location is the cytoskeleton. It is found in the microtubule organizing center. It localises to the centrosome. Functionally, plays a role in the microtubule-dependent coupling of the nucleus and the centrosome. Involved in the processes that regulate centrosome-mediated interkinetic nuclear migration (INM) of neural progenitors. May play a role in organizing centrosomal microtubules. May act as a tumor suppressor protein. May represent a tumor progression marker. This Homo sapiens (Human) protein is Transforming acidic coiled-coil-containing protein 2 (TACC2).